The following is a 460-amino-acid chain: Proton extrusion protein PxcA (460 aa).

Disordered stretches follow at residues 82–128 and 143–190; these read FSRL…QRRD and SRYK…GSGN. Polar residues predominate over residues 90–102; it reads QNGSGPTSAQDKA. A compositionally biased stretch (low complexity) spans 107–120; the sequence is AAEANVSESSSENS. The span at 151–163 shows a compositional bias: polar residues; that stretch reads KSQPISASISTSP. Residues 171–184 are compositionally biased toward low complexity; it reads QPTSTQPSSSNVSV. 4 helical membrane-spanning segments follow: residues 242–262, 337–357, 373–393, and 420–440; these read FLLL…NFLF, GLKN…LIFV, IYGL…DVFV, and FIYG…KYWI.

This sequence belongs to the CemA family.

It localises to the cell inner membrane. In terms of biological role, required for H(+) efflux immediately after light irradiation to form a rapid H(+) concentration gradient across the thylakoid membranes. Together with PxcL, contributes to transient H(+) uptake following dark to light transition. In Synechococcus sp. (strain JA-2-3B'a(2-13)) (Cyanobacteria bacterium Yellowstone B-Prime), this protein is Proton extrusion protein PxcA.